A 268-amino-acid chain; its full sequence is Small ribosomal subunit protein mS43 (268 aa).

A mitochondrion-targeting transit peptide spans 1-23 (MLNTGLRKGLALSPITHLLKRCS).

It belongs to the mitochondrion-specific ribosomal protein mS43 family. Component of the mitochondrial small ribosomal subunit (mt-SSU). Mature yeast 74S mitochondrial ribosomes consist of a small (37S) and a large (54S) subunit. The 37S small subunit contains a 15S ribosomal RNA (15S mt-rRNA) and at least 32 different proteins. The 54S large subunit contains a 21S rRNA (21S mt-rRNA) and at least 45 different proteins. mS43 forms a dimer with mS42, building a large protuberance adjacent to the mRNA channel exit in the mt-SSU body.

It localises to the mitochondrion. In terms of biological role, component of the mitochondrial ribosome (mitoribosome), a dedicated translation machinery responsible for the synthesis of mitochondrial genome-encoded proteins, including at least some of the essential transmembrane subunits of the mitochondrial respiratory chain. The mitoribosomes are attached to the mitochondrial inner membrane and translation products are cotranslationally integrated into the membrane. The sequence is that of Small ribosomal subunit protein mS43 from Schizosaccharomyces pombe (strain 972 / ATCC 24843) (Fission yeast).